The sequence spans 387 residues: Phosphoglycerate kinase (387 aa).

Residues 21 to 23 (DLN), arginine 36, 59 to 62 (HLGR), arginine 113, and arginine 146 each bind substrate. Residues lysine 197, glutamate 314, and 340 to 343 (GGDT) each bind ATP.

Belongs to the phosphoglycerate kinase family. As to quaternary structure, monomer.

The protein resides in the cytoplasm. It carries out the reaction (2R)-3-phosphoglycerate + ATP = (2R)-3-phospho-glyceroyl phosphate + ADP. It participates in carbohydrate degradation; glycolysis; pyruvate from D-glyceraldehyde 3-phosphate: step 2/5. The polypeptide is Phosphoglycerate kinase (Proteus mirabilis (strain HI4320)).